Consider the following 464-residue polypeptide: Soluble pyridine nucleotide transhydrogenase (464 aa).

Residue 35 to 44 coordinates FAD; the sequence is DDRRQVGGNC.

The protein belongs to the class-I pyridine nucleotide-disulfide oxidoreductase family. Requires FAD as cofactor.

It is found in the cytoplasm. The enzyme catalyses NAD(+) + NADPH = NADH + NADP(+). Conversion of NADPH, generated by peripheral catabolic pathways, to NADH, which can enter the respiratory chain for energy generation. The polypeptide is Soluble pyridine nucleotide transhydrogenase (Pseudomonas putida (strain GB-1)).